Here is a 286-residue protein sequence, read N- to C-terminus: MTRPPNISEDVRLRLDIAYDGTDFAGWAVQAGQRTVAGLDEAFTTVFRTPVRLRAAGRTDTGVHATGQVAHVDIPGTALSKANPRSPHTGDPEFLPLLRRLSRLLPVDVRVLDIACAPVGFDARFSALRRHYRYRLSTAPYGVQPNQARYVTAWPRELDLDSMSAASRDLLGLRDFAVFCRHRHGATTIRELQRLEWSREGYLITAHITADAFCWSMVRSLIGALLAVGDHRRTIGWCGELLTKASRSSDFTTAPAHGLTFIRVDYPPDDELAERAVITRDLRSSF.

Residue Asp-60 is the Nucleophile of the active site. Tyr-132 serves as a coordination point for substrate.

Belongs to the tRNA pseudouridine synthase TruA family. In terms of assembly, homodimer.

It catalyses the reaction uridine(38/39/40) in tRNA = pseudouridine(38/39/40) in tRNA. Functionally, formation of pseudouridine at positions 38, 39 and 40 in the anticodon stem and loop of transfer RNAs. This chain is tRNA pseudouridine synthase A, found in Mycobacterium leprae (strain TN).